A 152-amino-acid chain; its full sequence is Inner membrane protein YbbJ (152 aa).

The chain crosses the membrane as a helical span at residues 1–21 (MMELMVVHPHIFWLSLGGLLL). The Cytoplasmic segment spans residues 22–31 (AAEMLGGNGY). Residues 32–52 (LLWSGVAAVITGLVVWLVPLG) form a helical membrane-spanning segment. Residues 53-54 (WE) lie on the Periplasmic side of the membrane. A helical transmembrane segment spans residues 55-75 (WQGVMFAILTLLAAWLWWKWL). At 76-152 (SRRVREQKHS…ITLHIRAVSS (77 aa)) the chain is on the cytoplasmic side.

This sequence to M.jannaschii MJ0826.

The protein resides in the cell inner membrane. This is Inner membrane protein YbbJ (ybbJ) from Escherichia coli (strain K12).